Here is a 373-residue protein sequence, read N- to C-terminus: 3 beta-hydroxysteroid dehydrogenase/Delta 5--&gt;4-isomerase type 1 (373 aa).

Residues 10 to 15, Tyr-155, and Lys-159 contribute to the NADP(+) site; that span reads GAGGFL. Lys-159 (proton donor) is an active-site residue. Residues 288 to 308 form a helical membrane-spanning segment; sequence LALMYWIGFLLEVVSFLLSPV.

It belongs to the 3-beta-HSD family. As to expression, adrenal glands, testes and ovaries.

It is found in the endoplasmic reticulum membrane. Its subcellular location is the mitochondrion membrane. It carries out the reaction a 3beta-hydroxy-Delta(5)-steroid + NAD(+) = a 3-oxo-Delta(5)-steroid + NADH + H(+). It catalyses the reaction pregnenolone + NAD(+) = pregn-5-ene-3,20-dione + NADH + H(+). The enzyme catalyses 3beta-hydroxyandrost-5-en-17-one + NAD(+) = androst-5-ene-3,17-dione + NADH + H(+). The catalysed reaction is androst-5-en-3beta,17beta-diol + NAD(+) = 17beta-hydroxy-androst-5-en-3-one + NADH + H(+). It carries out the reaction a 3beta-hydroxysteroid + NADP(+) = a 3-oxosteroid + NADPH + H(+). It catalyses the reaction 5alpha-androstane-3beta,17beta-diol + NADP(+) = 17beta-hydroxy-5alpha-androstan-3-one + NADPH + H(+). The enzyme catalyses 3beta-hydroxy-5alpha-androstan-17-one + NADP(+) = 5alpha-androstan-3,17-dione + NADPH + H(+). The catalysed reaction is a 3-oxo-Delta(5)-steroid = a 3-oxo-Delta(4)-steroid. It carries out the reaction pregn-5-ene-3,20-dione = progesterone. It catalyses the reaction androst-5-ene-3,17-dione = androst-4-ene-3,17-dione. The enzyme catalyses 17beta-hydroxy-androst-5-en-3-one = testosterone. The catalysed reaction is 5alpha-androstane-3beta,17beta-diol + NAD(+) = 17beta-hydroxy-5alpha-androstan-3-one + NADH + H(+). Its pathway is steroid hormone biosynthesis. It functions in the pathway steroid metabolism. In terms of biological role, a bifunctional enzyme responsible for the oxidation and isomerization of 3beta-hydroxy-Delta(5)-steroid precursors to 3-oxo-Delta(4)-steroids, an essential step in steroid hormone biosynthesis. Specifically catalyzes the conversion of pregnenolone to progesterone, 17alpha-hydroxypregnenolone to 17alpha-hydroxyprogesterone, dehydroepiandrosterone (DHEA) to 4-androstenedione and androstenediol to testosterone. Additionally, catalyzes the interconversion between 3beta-hydroxy and 3-oxo-5alpha-androstane steroids controlling the bioavalability of the active forms. Specifically converts dihydrotestosterone to its inactive form 5alpha-androstanediol, that does not bind androgen receptor/AR. Also converts androstanedione, a precursor of testosterone and estrone, to epiandrosterone. Expected to use NAD(+) as preferred electron donor for the 3beta-hydroxy-steroid dehydrogenase activity and NADPH for the 3-ketosteroid reductase activity. The sequence is that of 3 beta-hydroxysteroid dehydrogenase/Delta 5--&gt;4-isomerase type 1 (HSD3B1) from Macaca mulatta (Rhesus macaque).